The following is a 127-amino-acid chain: Fluoride-specific ion channel FluC (127 aa).

A run of 4 helical transmembrane segments spans residues Ile4 to Ala24, Phe34 to Phe54, Phe65 to Leu85, and Phe97 to Leu117. Na(+) is bound by residues Gly77 and Thr80.

It belongs to the fluoride channel Fluc/FEX (TC 1.A.43) family.

Its subcellular location is the cell inner membrane. It carries out the reaction fluoride(in) = fluoride(out). With respect to regulation, na(+) is not transported, but it plays an essential structural role and its presence is essential for fluoride channel function. In terms of biological role, fluoride-specific ion channel. Important for reducing fluoride concentration in the cell, thus reducing its toxicity. The chain is Fluoride-specific ion channel FluC from Bacteroides fragilis (strain ATCC 25285 / DSM 2151 / CCUG 4856 / JCM 11019 / LMG 10263 / NCTC 9343 / Onslow / VPI 2553 / EN-2).